A 491-amino-acid polypeptide reads, in one-letter code: Probable ribonuclease FAU-1 (491 aa).

Belongs to the FAU-1 family.

In terms of biological role, probable RNase involved in rRNA stability through maturation and/or degradation of precursor rRNAs. Binds to RNA in loop regions with AU-rich sequences. The polypeptide is Probable ribonuclease FAU-1 (Thermofilum pendens (strain DSM 2475 / Hrk 5)).